The following is a 231-amino-acid chain: NADH-ubiquinone oxidoreductase chain 4 (231 aa).

6 helical membrane passes run 1–21, 34–54, 62–84, 89–111, 128–148, and 169–189; these read PIAGSMVLAAILLKLGGYGII, MFLPFIVLALWGATLANLTCL, LIAYSSISHMGLVVATIIIQTPW, AMALMIAHGFTSSALFCLANTTY, ILPMATTWWLLANLMNIAIPP, and TIIMLGLSMLITASYSLHMFL.

Belongs to the complex I subunit 4 family.

The protein localises to the mitochondrion membrane. It catalyses the reaction a ubiquinone + NADH + 5 H(+)(in) = a ubiquinol + NAD(+) + 4 H(+)(out). Its function is as follows. Core subunit of the mitochondrial membrane respiratory chain NADH dehydrogenase (Complex I) that is believed to belong to the minimal assembly required for catalysis. Complex I functions in the transfer of electrons from NADH to the respiratory chain. The immediate electron acceptor for the enzyme is believed to be ubiquinone. This Bothrops erythromelas (Caatinga lance head) protein is NADH-ubiquinone oxidoreductase chain 4 (MT-ND4).